We begin with the raw amino-acid sequence, 799 residues long: MAHRLPTRWDIKWEEELLKLWEKEGRFKTKISGSRPVFVIDTPPPYLSSNRPHIGQTASYAHFDMIARFLRMRGVDVIFPFYLDRNGLPIEVQVEKKYGVVAHEIPREKFIKMCKEELDSYEGEFVSSLRRWGLSFDYWPNGTDSPEYRRMTQKTFIELWHKGLVYEAERPTPWCPRCRTALAEPEIEYREEETYLNYIKFKVKETGEDIIIATTRPELLPATVAVIFHPDDSRYTRLNGMHAVVPPEGQVVPILPHKAANPNFGSGLVMISTFGDTRDLMIVNELKLPIRIIIDEGGRIKTGKYAGVSIREARAKIIEDLKNAGLLVKQERLVHNVPVCWRCKTPLEIIVTRELFIKQIEFKEKLIELAGKMEFKPPEYRQVLIDWIKSLELDWPVSRRRYYATEIPIWWCAKPNGERVPLLPKGGEYYVPWRDEPPPEVKEACKDGRLEGDTRVFDTWFDSSISWMYASGVTKDFNAFSKVYPHSIMRPQGYDIIRTWLYYSLLRAYLLYGDVPFRYVRINGMGLDEKGEAMHKSKGNVIDLLAPVEKYGADPVRFWAAAAGRLGTDYRYNENVIREGKEFLTKVWNISRFVLSFPEPQQKPQLAPVDRALLARLYDVAKKVITAYSEFDVYEPAHALYNFIWHEFADHYIELVKSRAYNREGVFTEEEQRAAIWTLYTAWRYSLKLLAPIMPFVTDKIWREAYGRSIHDEMIEDPPEEWKEGDQALFHLVKKINSAVWRYKNRRGMSLADRLDAVLYVSELAMQAAKDLKYMHKVSDVRPGRGAEQIDDEGLVWLG.

Lys536 is a binding site for ATP.

Belongs to the class-I aminoacyl-tRNA synthetase family. ValS type 2 subfamily.

The protein resides in the cytoplasm. The enzyme catalyses tRNA(Val) + L-valine + ATP = L-valyl-tRNA(Val) + AMP + diphosphate. Its function is as follows. Catalyzes the attachment of valine to tRNA(Val). As ValRS can inadvertently accommodate and process structurally similar amino acids such as threonine, to avoid such errors, it has a 'posttransfer' editing activity that hydrolyzes mischarged Thr-tRNA(Val) in a tRNA-dependent manner. The sequence is that of Valine--tRNA ligase (valS) from Pyrobaculum aerophilum (strain ATCC 51768 / DSM 7523 / JCM 9630 / CIP 104966 / NBRC 100827 / IM2).